The primary structure comprises 29 residues: Acidic phospholipase A2 Omo-E6 (29 aa).

The Ca(2+) site is built by Tyr-27 and Gly-29.

The cofactor is Ca(2+). In terms of tissue distribution, expressed by the venom gland.

The protein localises to the secreted. It carries out the reaction a 1,2-diacyl-sn-glycero-3-phosphocholine + H2O = a 1-acyl-sn-glycero-3-phosphocholine + a fatty acid + H(+). Its function is as follows. Snake venom phospholipase A2 (PLA2) that inhibits the ADP- and collagen-induced human platelet aggregation. Exhibits strong hydrolytic activities and prefers the anionic micelles (dPPC with deoxycholate) to the zwitterionic micelles (dPPC with Triton X-100). PLA2 catalyzes the calcium-dependent hydrolysis of the 2-acyl groups in 3-sn-phosphoglycerides. The polypeptide is Acidic phospholipase A2 Omo-E6 (Ovophis monticola (Chinese mountain pitviper)).